The sequence spans 640 residues: MGCCQSRIDSKEIVSRCKARKRYLKHLVKARQTLSVSHALYLRSLRAVGSSLVHFSSKETPLHLHHNPPSPSPPPPPPPRPPPPPLSPGSETTTWTTTTTSSVLPPPPPPPPPPPPPSSTWDFWDPFIPPPPSSSEEEWEEETTTATRTATGTGSDAAVTTAPTTATPQASSVVSGFSKDTMTTTTTGSELAVVVSRNGKDLMEIIKEVDEYFLKAADSGAPLSSLLEISTSITDFSGHSKSGKMYSSSNYECNLNPTSFWTRGFAPSKLSEYRNAGGVIGGNCIVGSHSSTVDRLYAWEKKLYQEVKYAESIKMDHEKKVEQVRRLEMKRAEYVKTEKAKKDVEKLESQLSVSSQAIQSASNEIIKLRETELYPQLVELVKGLMCMWRSMYESHQVQTHIVQQLKYLNTIPSTEPTSELHRQSTLQLELEVQQWHHSFCNLVKAQRDYIQSLTGWLRLSLFQFSKNPLVRSSYESKIYSFCEEWHLAIDRIPDKVASEGIKSFLTAVHGIVAQQADEHKQKKRTESMLKDFEKKSASLRALESKYSPYSVPESRKKNPVIEKRVKVEMLKGKAEEEKSKHEKSVSVTRAMTLNNLQMGFPHVFQAMVGFSSVCMQAFESVYNQAKSIGEDQEEVKRLLP.

Residues 60 to 175 are disordered; it reads TPLHLHHNPP…ATPQASSVVS (116 aa). Pro residues predominate over residues 68–87; the sequence is PPSPSPPPPPPPRPPPPPLS. Over residues 88-103 the composition is skewed to low complexity; that stretch reads PGSETTTWTTTTTSSV. Over residues 104-118 the composition is skewed to pro residues; sequence LPPPPPPPPPPPPPS. Residues 144–173 are compositionally biased toward low complexity; sequence TTATRTATGTGSDAAVTTAPTTATPQASSV. A coiled-coil region spans residues 336–371; that stretch reads KTEKAKKDVEKLESQLSVSSQAIQSASNEIIKLRET.

In terms of tissue distribution, expressed in the root tip of primary and lateral roots, specifically in the meristematic region, including the quiescent center and lateral root cap cells.

Its subcellular location is the nucleus. In terms of biological role, required for the coordination of cell differentiation and cell elongation in the root tip. Required for the coordination of cell processes necessary for correct root growth in response to phosphate starvation, through the modulation of the auxin transporter protein PIN7. This is Protein ALTERED PHOSPHATE STARVATION RESPONSE 1 from Arabidopsis thaliana (Mouse-ear cress).